The following is a 110-amino-acid chain: Acid stress chaperone HdeA (110 aa).

Residues 1-21 (MKKVLGVILGGLLLLPVVSNA) form the signal peptide. Cys-39 and Cys-87 are joined by a disulfide.

It belongs to the HdeA family.

It is found in the periplasm. Required for optimal acid stress protection. Exhibits a chaperone-like activity only at low pH by suppressing non-specifically the aggregation of denaturated periplasmic proteins. The chain is Acid stress chaperone HdeA from Escherichia coli O157:H7.